We begin with the raw amino-acid sequence, 263 residues long: uncharacterized protein (263 aa).

A run of 7 helical transmembrane segments spans residues 53–73 (FWII…LVKI), 103–123 (GFLF…LPGL), 130–150 (IILP…VFSY), 153–173 (LIPA…EPLW), 181–201 (FILV…IQIL), 213–233 (MLAA…ILTP), and 241–261 (LLLS…LFLI).

This sequence belongs to the TatC family.

Its subcellular location is the plastid. The protein resides in the chloroplast membrane. This is an uncharacterized protein from Trieres chinensis (Marine centric diatom).